The following is a 412-amino-acid chain: Short-chain specific acyl-CoA dehydrogenase, mitochondrial (412 aa).

The N-terminal 24 residues, 1-24, are a transit peptide targeting the mitochondrion; it reads MAAALLARARGPLRRALGVRDWRR. Residue Thr27 is modified to Phosphothreonine. Lys51 is subject to N6-acetyllysine; alternate. Residue Lys51 is modified to N6-succinyllysine; alternate. At Lys72 the chain carries N6-acetyllysine. Lys129 carries the N6-acetyllysine; alternate modification. Lys129 is modified (N6-succinyllysine; alternate). FAD is bound by residues 152-161 and 185-187; these read FALSEPGNGS and WIT. A substrate-binding site is contributed by Ser161. Lys208 carries the post-translational modification N6-acetyllysine. N6-acetyllysine; alternate is present on Lys262. Lys262 bears the N6-succinyllysine; alternate mark. Position 269-272 (269-272) interacts with substrate; it reads DMGR. At Lys292 the chain carries N6-acetyllysine. Arg297 serves as a coordination point for FAD. Residue Lys306 is modified to N6-acetyllysine; alternate. Lys306 carries the post-translational modification N6-succinyllysine; alternate. Residues Gln308 and 365–369 each bind FAD; that span reads QILGG. Glu392 (proton acceptor) is an active-site residue. Residue Gly393 coordinates substrate. Position 394–396 (394–396) interacts with FAD; it reads TSE.

It belongs to the acyl-CoA dehydrogenase family. As to quaternary structure, homotetramer. FAD is required as a cofactor.

The protein resides in the mitochondrion matrix. It catalyses the reaction a short-chain 2,3-saturated fatty acyl-CoA + oxidized [electron-transfer flavoprotein] + H(+) = a short-chain (2E)-enoyl-CoA + reduced [electron-transfer flavoprotein]. The enzyme catalyses butanoyl-CoA + oxidized [electron-transfer flavoprotein] + H(+) = (2E)-butenoyl-CoA + reduced [electron-transfer flavoprotein]. The catalysed reaction is pentanoyl-CoA + oxidized [electron-transfer flavoprotein] + H(+) = (2E)-pentenoyl-CoA + reduced [electron-transfer flavoprotein]. It carries out the reaction hexanoyl-CoA + oxidized [electron-transfer flavoprotein] + H(+) = (2E)-hexenoyl-CoA + reduced [electron-transfer flavoprotein]. The protein operates within lipid metabolism; mitochondrial fatty acid beta-oxidation. In terms of biological role, short-chain specific acyl-CoA dehydrogenase is one of the acyl-CoA dehydrogenases that catalyze the first step of mitochondrial fatty acid beta-oxidation, an aerobic process breaking down fatty acids into acetyl-CoA and allowing the production of energy from fats. The first step of fatty acid beta-oxidation consists in the removal of one hydrogen from C-2 and C-3 of the straight-chain fatty acyl-CoA thioester, resulting in the formation of trans-2-enoyl-CoA. Among the different mitochondrial acyl-CoA dehydrogenases, short-chain specific acyl-CoA dehydrogenase acts specifically on acyl-CoAs with saturated 4 to 6 carbons long primary chains. The chain is Short-chain specific acyl-CoA dehydrogenase, mitochondrial (Acads) from Mus musculus (Mouse).